We begin with the raw amino-acid sequence, 483 residues long: 6-phosphogluconate dehydrogenase, decarboxylating (483 aa).

NADP(+) is bound by residues 10–15 (GLAVMG) and 33–35 (NRT). The residue at position 38 (lysine 38) is an N6-acetyllysine. The residue at position 57 (serine 57) is a Phosphoserine. N6-acetyllysine is present on lysine 59. Residues 75–77 (VKA) and asparagine 103 each bind NADP(+). Substrate-binding positions include asparagine 103 and 129–131 (SGG). Serine 129 is subject to Phosphoserine. Lysine 184 serves as the catalytic Proton acceptor. A substrate-binding site is contributed by 187-188 (HN). The Proton donor role is filled by glutamate 191. 5 residues coordinate substrate: tyrosine 192, lysine 261, arginine 288, arginine 447, and histidine 453. Position 478 to 481 (478 to 481 (SSSY)) interacts with NADP(+).

The protein belongs to the 6-phosphogluconate dehydrogenase family. In terms of assembly, homodimer.

The protein localises to the cytoplasm. The enzyme catalyses 6-phospho-D-gluconate + NADP(+) = D-ribulose 5-phosphate + CO2 + NADPH. Its pathway is carbohydrate degradation; pentose phosphate pathway; D-ribulose 5-phosphate from D-glucose 6-phosphate (oxidative stage): step 3/3. Its function is as follows. Catalyzes the oxidative decarboxylation of 6-phosphogluconate to ribulose 5-phosphate and CO(2), with concomitant reduction of NADP to NADPH. The sequence is that of 6-phosphogluconate dehydrogenase, decarboxylating (Pgd) from Mus musculus (Mouse).